Consider the following 1072-residue polypeptide: Netrin receptor unc-5 (1072 aa).

An N-terminal signal peptide occupies residues 1–30 (MAVINKAGNVIALLLVKLQLILLFTLSVSG). Residues 31–440 (ELPQLDYGSL…SSEAEEAGDL (410 aa)) are Extracellular-facing. The disordered stretch occupies residues 77-100 (LGNSSEDENVRPQQGSSSSGLGSS). Asparagine 79 carries an N-linked (GlcNAc...) asparagine glycan. Residues 128–224 (PIFLIEPESV…RGVVKSQAAT (97 aa)) enclose the Ig-like domain. 5 disulfide bridges follow: cysteine 149–cysteine 207, cysteine 253–cysteine 303, cysteine 336–cysteine 375, cysteine 338–cysteine 378, and cysteine 352–cysteine 364. Positions 232-314 (KSFNQSPTSL…AENIAGRRVS (83 aa)) constitute an Ig-like C2-type domain. Asparagine 300 carries an N-linked (GlcNAc...) asparagine glycan. 2 consecutive TSP type-1 domains span residues 324–379 (NGGW…AACP) and 398–499 (MARW…EQCQ). The chain crosses the membrane as a helical span at residues 441 to 461 (LLGAPGVGMAALIAAAGVGAV). Residues 462-1072 (GSPSEATGSS…IVETIGPLWI (611 aa)) are Cytoplasmic-facing. Residues 654–802 (SSTYEMLGSA…LGHFTVVAEP (149 aa)) enclose the ZU5 domain. A Death domain is found at 980-1067 (LICGALDPPR…DVLDIIVETI (88 aa)).

This sequence belongs to the unc-5 family. In terms of processing, phosphorylated on different cytoplasmic tyrosine residues. In terms of tissue distribution, prior to gastrulation, it is strongly expressed in the presumptive mesoderm. Mesodermal expression begins to fade during stages 13-14, persisting only in the cells that form the dorsal vessel. Expressed within the CNS from late stage 13, shortly after the first axons have extended. Detected in several dispersed clusters of cells within the CNS, increasing in number as development proceeds. Also expressed in the peripheral and exit glia, which migrate laterally out of the CNS between stages 14 and 17. Strongly expressed in motor axons that exit the CNS ipsilaterally via the segmental nerve root (SN). Not expressed on either commissural or longitudinal axons within the CNS, nor on motor axons that exit via the intersegmental nerve (ISN). In the periphery, it is detected on all branches of the SN. Also expressed at high level in exit and peripheral glia along both the SN and ISN.

It localises to the membrane. Its function is as follows. Receptor for netrin required for motor axon guidance. Mediates both short- and long-range axon motor repulsion in the developing nervous system upon ligand binding. Also involved in glial migration. While short-range repulsion requires both fra and unc-5, long-range repulsion only requires unc-5. This chain is Netrin receptor unc-5 (unc-5), found in Drosophila melanogaster (Fruit fly).